The primary structure comprises 116 residues: Large ribosomal subunit protein bL20c (116 aa).

This sequence belongs to the bacterial ribosomal protein bL20 family.

It is found in the plastid. Its subcellular location is the chloroplast. Binds directly to 23S ribosomal RNA and is necessary for the in vitro assembly process of the 50S ribosomal subunit. It is not involved in the protein synthesizing functions of that subunit. This is Large ribosomal subunit protein bL20c from Oltmannsiellopsis viridis (Marine flagellate).